The following is a 189-amino-acid chain: Glutathione-dependent formaldehyde-activating enzyme (189 aa).

Residues 20–167 (FAGGTLVCKC…LKELGLEPYD (148 aa)) form the CENP-V/GFA domain. 7 residues coordinate Zn(2+): Cys27, Cys29, Cys48, Cys50, Cys53, Cys95, and Cys98.

The protein belongs to the Gfa family. Zn(2+) serves as cofactor.

It carries out the reaction S-(hydroxymethyl)glutathione = glutathione + formaldehyde. The protein operates within one-carbon metabolism; formaldehyde degradation; formate from formaldehyde (glutathione route): step 1/3. In terms of biological role, catalyzes the condensation of formaldehyde and glutathione to S-hydroxymethylglutathione. This is Glutathione-dependent formaldehyde-activating enzyme from Rhodopseudomonas palustris (strain BisA53).